The following is a 168-amino-acid chain: Protein-export protein SecB (168 aa).

A compositionally biased stretch (polar residues) spans 1–10 (MSDQGTNNGE). The interval 1–22 (MSDQGTNNGESGNGGAQNGEAP) is disordered.

It belongs to the SecB family. As to quaternary structure, homotetramer, a dimer of dimers. One homotetramer interacts with 1 SecA dimer.

Its subcellular location is the cytoplasm. Its function is as follows. One of the proteins required for the normal export of preproteins out of the cell cytoplasm. It is a molecular chaperone that binds to a subset of precursor proteins, maintaining them in a translocation-competent state. It also specifically binds to its receptor SecA. This Parvibaculum lavamentivorans (strain DS-1 / DSM 13023 / NCIMB 13966) protein is Protein-export protein SecB.